The sequence spans 234 residues: Large ribosomal subunit protein uL1 (234 aa).

It belongs to the universal ribosomal protein uL1 family. In terms of assembly, part of the 50S ribosomal subunit.

In terms of biological role, binds directly to 23S rRNA. The L1 stalk is quite mobile in the ribosome, and is involved in E site tRNA release. Protein L1 is also a translational repressor protein, it controls the translation of the L11 operon by binding to its mRNA. The sequence is that of Large ribosomal subunit protein uL1 from Bartonella tribocorum (strain CIP 105476 / IBS 506).